The primary structure comprises 787 residues: Exocyst complex component SEC15B (787 aa).

Belongs to the SEC15 family. In terms of assembly, the exocyst complex is composed of SEC3, SEC5, SEC6, SEC8, SEC10, EXO70A1 and EXO84B. Interacts with EXO84B. Binds to EXO70H1 AND EXO70B2. Binds directly to B1L.

The protein localises to the cytoplasm. The protein resides in the cytosol. It is found in the cytoskeleton. It localises to the phragmoplast. Its subcellular location is the secreted. The protein localises to the cell wall. The protein resides in the extracellular exosome. Component of the exocyst complex involved in the docking of exocytic vesicles with fusion sites on the plasma membrane during regulated or polarized secretion. Involved in polarized cell growth and organ morphogenesis. During cytokinesis, involved in cell plate initiation, cell plate maturation and formation of new primary cell wall. The polypeptide is Exocyst complex component SEC15B (Arabidopsis thaliana (Mouse-ear cress)).